The sequence spans 430 residues: Tol-Pal system protein TolB (430 aa).

The signal sequence occupies residues M1 to A21.

The protein belongs to the TolB family. As to quaternary structure, the Tol-Pal system is composed of five core proteins: the inner membrane proteins TolA, TolQ and TolR, the periplasmic protein TolB and the outer membrane protein Pal. They form a network linking the inner and outer membranes and the peptidoglycan layer.

Its subcellular location is the periplasm. Its function is as follows. Part of the Tol-Pal system, which plays a role in outer membrane invagination during cell division and is important for maintaining outer membrane integrity. TolB occupies a key intermediary position in the Tol-Pal system because it communicates directly with both membrane-embedded components, Pal in the outer membrane and TolA in the inner membrane. This is Tol-Pal system protein TolB from Enterobacter sp. (strain 638).